The sequence spans 1042 residues: Carbamoyl phosphate synthase large chain (1042 aa).

The tract at residues 1 to 417 is carboxyphosphate synthetic domain; sequence MTEDSRTILL…SLLKALRSSE (417 aa). ATP-binding residues include arginine 127, arginine 182, glycine 188, glycine 189, glutamate 221, isoleucine 223, glutamate 228, glycine 254, isoleucine 255, histidine 256, glutamine 297, and glutamate 314. The ATP-grasp 1 domain maps to 131–343; that stretch reads RQRMADLGQP…IARVTAKVAL (213 aa). The Mg(2+) site is built by glutamine 297, glutamate 314, and asparagine 316. Mn(2+) is bound by residues glutamine 297, glutamate 314, and asparagine 316. An oligomerization domain region spans residues 418 to 558; the sequence is YDPSVDWATV…SQGSTGSDVR (141 aa). Residues 559-947 are carbamoyl phosphate synthetic domain; sequence ADRDAHSVVI…WKAQVAASNA (389 aa). In terms of domain architecture, ATP-grasp 2 spans 689-880; it reads NRLLDERDIS…IAKLAAKVMA (192 aa). Residues arginine 725, glutamate 764, leucine 766, glutamate 771, glycine 796, valine 797, histidine 798, serine 799, glutamine 839, and glutamate 851 each contribute to the ATP site. Glutamine 839, glutamate 851, and asparagine 853 together coordinate Mg(2+). Mn(2+) contacts are provided by glutamine 839, glutamate 851, and asparagine 853. In terms of domain architecture, MGS-like spans 947–1042; sequence APVPGSTAVV…DRPVNDETWG (96 aa). Residues 948 to 1042 are allosteric domain; that stretch reads PVPGSTAVVD…DRPVNDETWG (95 aa).

The protein belongs to the CarB family. Composed of two chains; the small (or glutamine) chain promotes the hydrolysis of glutamine to ammonia, which is used by the large (or ammonia) chain to synthesize carbamoyl phosphate. Tetramer of heterodimers (alpha,beta)4. Mg(2+) is required as a cofactor. The cofactor is Mn(2+).

The enzyme catalyses hydrogencarbonate + L-glutamine + 2 ATP + H2O = carbamoyl phosphate + L-glutamate + 2 ADP + phosphate + 2 H(+). The catalysed reaction is hydrogencarbonate + NH4(+) + 2 ATP = carbamoyl phosphate + 2 ADP + phosphate + 2 H(+). The protein operates within amino-acid biosynthesis; L-arginine biosynthesis; carbamoyl phosphate from bicarbonate: step 1/1. It functions in the pathway pyrimidine metabolism; UMP biosynthesis via de novo pathway; (S)-dihydroorotate from bicarbonate: step 1/3. Large subunit of the glutamine-dependent carbamoyl phosphate synthetase (CPSase). CPSase catalyzes the formation of carbamoyl phosphate from the ammonia moiety of glutamine, carbonate, and phosphate donated by ATP, constituting the first step of 2 biosynthetic pathways, one leading to arginine and/or urea and the other to pyrimidine nucleotides. The large subunit (synthetase) binds the substrates ammonia (free or transferred from glutamine from the small subunit), hydrogencarbonate and ATP and carries out an ATP-coupled ligase reaction, activating hydrogencarbonate by forming carboxy phosphate which reacts with ammonia to form carbamoyl phosphate. This chain is Carbamoyl phosphate synthase large chain, found in Halobacterium salinarum (strain ATCC 700922 / JCM 11081 / NRC-1) (Halobacterium halobium).